Reading from the N-terminus, the 284-residue chain is Nucleotide-binding protein VF_0384 (284 aa).

8-15 is a binding site for ATP; that stretch reads GSSGAGKS. 56–59 serves as a coordination point for GTP; the sequence is DIRN.

The protein belongs to the RapZ-like family.

In terms of biological role, displays ATPase and GTPase activities. This is Nucleotide-binding protein VF_0384 from Aliivibrio fischeri (strain ATCC 700601 / ES114) (Vibrio fischeri).